The following is a 300-amino-acid chain: Ribosomal RNA small subunit methyltransferase H (300 aa).

Residues 33–35 (GGH), Asp52, Phe79, Asp100, and Gln107 contribute to the S-adenosyl-L-methionine site.

It belongs to the methyltransferase superfamily. RsmH family.

Its subcellular location is the cytoplasm. It carries out the reaction cytidine(1402) in 16S rRNA + S-adenosyl-L-methionine = N(4)-methylcytidine(1402) in 16S rRNA + S-adenosyl-L-homocysteine + H(+). Specifically methylates the N4 position of cytidine in position 1402 (C1402) of 16S rRNA. The polypeptide is Ribosomal RNA small subunit methyltransferase H (Mycoplasmopsis agalactiae (strain NCTC 10123 / CIP 59.7 / PG2) (Mycoplasma agalactiae)).